A 178-amino-acid chain; its full sequence is Large ribosomal subunit protein uL10 (178 aa).

The protein belongs to the universal ribosomal protein uL10 family. Part of the ribosomal stalk of the 50S ribosomal subunit. The N-terminus interacts with L11 and the large rRNA to form the base of the stalk. The C-terminus forms an elongated spine to which L12 dimers bind in a sequential fashion forming a multimeric L10(L12)X complex.

Its function is as follows. Forms part of the ribosomal stalk, playing a central role in the interaction of the ribosome with GTP-bound translation factors. This is Large ribosomal subunit protein uL10 from Stenotrophomonas maltophilia (strain R551-3).